We begin with the raw amino-acid sequence, 434 residues long: 3-phosphoshikimate 1-carboxyvinyltransferase (434 aa).

Residues K22, S23, and R27 each coordinate 3-phosphoshikimate. K22 serves as a coordination point for phosphoenolpyruvate. Phosphoenolpyruvate contacts are provided by G94 and R122. Residues S169, S170, Q171, S199, D320, and K347 each contribute to the 3-phosphoshikimate site. Q171 lines the phosphoenolpyruvate pocket. The Proton acceptor role is filled by D320. Phosphoenolpyruvate-binding residues include R351, R395, and K420.

This sequence belongs to the EPSP synthase family. In terms of assembly, monomer.

It is found in the cytoplasm. The catalysed reaction is 3-phosphoshikimate + phosphoenolpyruvate = 5-O-(1-carboxyvinyl)-3-phosphoshikimate + phosphate. The protein operates within metabolic intermediate biosynthesis; chorismate biosynthesis; chorismate from D-erythrose 4-phosphate and phosphoenolpyruvate: step 6/7. Its function is as follows. Catalyzes the transfer of the enolpyruvyl moiety of phosphoenolpyruvate (PEP) to the 5-hydroxyl of shikimate-3-phosphate (S3P) to produce enolpyruvyl shikimate-3-phosphate and inorganic phosphate. This chain is 3-phosphoshikimate 1-carboxyvinyltransferase, found in Ralstonia pickettii (strain 12J).